Reading from the N-terminus, the 276-residue chain is Large ribosomal subunit protein uL2 (276 aa).

The disordered stretch occupies residues 218 to 255 (PTVRGSAMNPCDHPHGGGEGRTPIGMSSPVTPWGKPAL).

This sequence belongs to the universal ribosomal protein uL2 family. In terms of assembly, part of the 50S ribosomal subunit. Forms a bridge to the 30S subunit in the 70S ribosome.

Its function is as follows. One of the primary rRNA binding proteins. Required for association of the 30S and 50S subunits to form the 70S ribosome, for tRNA binding and peptide bond formation. It has been suggested to have peptidyltransferase activity; this is somewhat controversial. Makes several contacts with the 16S rRNA in the 70S ribosome. The sequence is that of Large ribosomal subunit protein uL2 from Clostridium tetani (strain Massachusetts / E88).